We begin with the raw amino-acid sequence, 468 residues long: uncharacterized protein (468 aa).

A run of 12 helical transmembrane segments spans residues 13-33, 40-60, 76-96, 112-132, 141-161, 194-214, 237-257, 260-280, 328-348, 354-374, 414-434, and 443-463; these read LEAF…YALF, LMII…HCYL, ALLI…GGTI, LYVT…TSWG, FMGV…AVVA, LLYT…VYGL, VYHF…GSIT, PTIP…ILIQ, CFCA…TVII, FVHS…TMIG, IIEP…TLGV, and AILC…GIGI.

This sequence belongs to the NhaC Na(+)/H(+) (TC 2.A.35) antiporter family.

The protein localises to the cell membrane. This is an uncharacterized protein from Haemophilus influenzae (strain ATCC 51907 / DSM 11121 / KW20 / Rd).